A 209-amino-acid polypeptide reads, in one-letter code: LexA repressor (209 aa).

A DNA-binding region (H-T-H motif) is located at residues 32–52 (VREIGKAVDLSSTSTVHGHLA). Residues Ser-131 and Lys-169 each act as for autocatalytic cleavage activity in the active site.

The protein belongs to the peptidase S24 family. As to quaternary structure, homodimer.

It catalyses the reaction Hydrolysis of Ala-|-Gly bond in repressor LexA.. Its function is as follows. Represses a number of genes involved in the response to DNA damage (SOS response), including recA and lexA. In the presence of single-stranded DNA, RecA interacts with LexA causing an autocatalytic cleavage which disrupts the DNA-binding part of LexA, leading to derepression of the SOS regulon and eventually DNA repair. The polypeptide is LexA repressor (Enterococcus faecalis (strain ATCC 700802 / V583)).